The primary structure comprises 396 residues: Apolipoprotein A-IV (396 aa).

Residues 1–20 form the signal peptide; the sequence is MFLKAVVLTLALVAVAGARA. 13 repeat units span residues 33–54, 60–81, 82–103, 115–136, 137–158, 159–180, 181–202, 203–224, 225–246, 247–268, 269–286, 287–308, and 309–330. Positions 33 to 330 are 13 X 22 AA approximate tandem repeats; the sequence is DYFSQLSNNA…QMEQLRQKLG (298 aa). Residues 361–396 form a disordered region; the sequence is KESQDKTLSLPELEQQQEQQQEQQQEQVQMLAPLES. The segment covering 374-389 has biased composition (low complexity); it reads EQQQEQQQEQQQEQVQ.

It belongs to the apolipoprotein A1/A4/E family. Homodimer. Post-translationally, phosphorylation sites are present in the extracellular medium. As to expression, synthesized primarily in the intestine and secreted in plasma.

The protein resides in the secreted. Functionally, may have a role in chylomicrons and VLDL secretion and catabolism. Required for efficient activation of lipoprotein lipase by ApoC-II; potent activator of LCAT. Apoa-IV is a major component of HDL and chylomicrons. The chain is Apolipoprotein A-IV from Homo sapiens (Human).